We begin with the raw amino-acid sequence, 735 residues long: Mitochondrial potassium channel ATP-binding subunit (735 aa).

The N-terminal 25 residues, Met1–Phe25, are a transit peptide targeting the mitochondrion. Residues Gln26 to His144 are Mitochondrial matrix-facing. Residues Leu145–Ile165 traverse the membrane as a helical segment. The ABC transmembrane type-1 domain maps to Val150–Arg437. The Mitochondrial intermembrane portion of the chain corresponds to Pro166 to Ser195. Residues Thr196–Leu216 traverse the membrane as a helical segment. Residues Ser217–Thr295 lie on the Mitochondrial matrix side of the membrane. A helical transmembrane segment spans residues Leu296–Leu316. Topologically, residues Arg317 to Ser735 are mitochondrial intermembrane. One can recognise an ABC transporter domain in the interval Val472–Arg709. Gly507–Thr514 is a binding site for ATP. A disordered region spans residues Leu712–Ser735.

Belongs to the ABC transporter superfamily. ABCB family. Multidrug resistance exporter (TC 3.A.1.201) subfamily. As to quaternary structure, the mitochondrial potassium channel (mitoK(ATP)) is composed of 4 subunits of CCDC51/MITOK and 4 subunits of ABCB8/MITOSUR. Interacts with C10orf88/PAAT. Interacts with NRP1; NRP1 regulates ABCB8/MITOSUR protein levels in mitochondria. Ubiquitous.

It localises to the mitochondrion inner membrane. With respect to regulation, channel activity inhibited by ATP via ABCB8/MITOSUR subunit. ATP-binding subunit of the mitochondrial ATP-gated potassium channel (mitoK(ATP)). Together with pore-forming subunit CCDC51/MITOK of the mitoK(ATP) channel, mediates ATP-dependent potassium currents across the mitochondrial inner membrane. An increase in ATP intracellular levels closes the channel, inhibiting K(+) transport, whereas a decrease in ATP levels enhances K(+) uptake in the mitochondrial matrix. Plays a role in mitochondrial iron transport. Required for maintenance of normal cardiac function, possibly by influencing mitochondrial iron export and regulating the maturation of cytosolic iron sulfur cluster-containing enzymes. This Homo sapiens (Human) protein is Mitochondrial potassium channel ATP-binding subunit.